The following is a 198-amino-acid chain: Ribonuclease HII (198 aa).

An RNase H type-2 domain is found at 10–198 (QLVAGVDEVG…PVKRALGLAS (189 aa)). Asp-16, Glu-17, and Asp-108 together coordinate a divalent metal cation.

Belongs to the RNase HII family. Mn(2+) serves as cofactor. It depends on Mg(2+) as a cofactor.

Its subcellular location is the cytoplasm. It catalyses the reaction Endonucleolytic cleavage to 5'-phosphomonoester.. Its function is as follows. Endonuclease that specifically degrades the RNA of RNA-DNA hybrids. The chain is Ribonuclease HII from Shigella boydii serotype 18 (strain CDC 3083-94 / BS512).